A 379-amino-acid chain; its full sequence is MANLRKTHPLLKIANDALVDLPTPSNISAWWNFGSLLGLCLISQILTGLFLAMHYTSDISTAFSSVAHICRDVNYGWLIRNLHANGASFFFICLYLHIARGLYYGSYLYKETWNIGVVLFLLVMMTAFVGYVLPWGQMSFWGATVITNLLSAVPYVGDSLVQWIWGGFSVDNATLTRFFAFHFLFPFVVAGATMLHLLFLHETGSNNPVGLNSDADKIPFHPYFSYKDLLGFIIMLTALTMLALFYPNLLGDPDNFTPANPMVTPPHIKPEWYFLFAYAILRSIPNKLGGVLALLSSILVLMVVPILHTSKQRGLTFRPISQLLFWILVADMLVLTWIGGMPVEHPYIIIGQVASVLYFSLFLVLNPLVGWLENKVMNW.

4 helical membrane-spanning segments follow: residues 33 to 53 (FGSLLGLCLISQILTGLFLAM), 77 to 98 (WLIRNLHANGASFFFICLYLHI), 113 to 133 (WNIGVVLFLLVMMTAFVGYVL), and 178 to 198 (FFAFHFLFPFVVAGATMLHLL). Heme b-binding residues include His83 and His97. Heme b is bound by residues His182 and His196. His201 contributes to the a ubiquinone binding site. Transmembrane regions (helical) follow at residues 226–246 (YKDLLGFIIMLTALTMLALFY), 288–308 (LGGVLALLSSILVLMVVPILH), 320–340 (ISQLLFWILVADMLVLTWIGG), and 347–367 (YIIIGQVASVLYFSLFLVLNP).

The protein belongs to the cytochrome b family. As to quaternary structure, the cytochrome bc1 complex contains 3 respiratory subunits (MT-CYB, CYC1 and UQCRFS1), 2 core proteins (UQCRC1 and UQCRC2) and probably 6 low-molecular weight proteins. It depends on heme b as a cofactor.

Its subcellular location is the mitochondrion inner membrane. In terms of biological role, component of the ubiquinol-cytochrome c reductase complex (complex III or cytochrome b-c1 complex) that is part of the mitochondrial respiratory chain. The b-c1 complex mediates electron transfer from ubiquinol to cytochrome c. Contributes to the generation of a proton gradient across the mitochondrial membrane that is then used for ATP synthesis. The polypeptide is Cytochrome b (mt-cyb) (Anguilla mossambica (African longfin eel)).